Reading from the N-terminus, the 26-residue chain is Maculatin-3.1 (26 aa).

Position 26 is an alanine amide (A26).

In terms of tissue distribution, expressed by the skin dorsal glands.

It localises to the secreted. Its function is as follows. Shows antibacterial activity against S.uberis. This is Maculatin-3.1 from Ranoidea genimaculata (Brown-spotted tree frog).